The chain runs to 155 residues: Protein SREK1IP1 (155 aa).

The CCHC-type zinc-finger motif lies at 13-30 (AGCKKCGYPGHLTFECRN). Residues 43 to 155 (DVSSTSTEDS…SSSSQSSSSD (113 aa)) are disordered. The span at 58–74 (EVARAPADKKNVTDTGK) shows a compositional bias: basic and acidic residues. Positions 75–93 (KKLKRKKEKKLKKHRKRLH) are enriched in basic residues. The segment covering 94-103 (SSSESDDNSK) has biased composition (basic and acidic residues). Basic residues predominate over residues 104–137 (AKKRKSQKKEKRVKHKAKKGKQHKKDKRKEKRER). A compositionally biased stretch (low complexity) spans 140–155 (SSSSSSSSSSQSSSSD).

Possible splicing regulator involved in the control of cellular survival. This is Protein SREK1IP1 (srek1ip1) from Xenopus tropicalis (Western clawed frog).